Reading from the N-terminus, the 393-residue chain is MIDEKLKGYIDKRLNEIKDKIPDKLHEDLRAAIMDINGVELTEEDIDRIIDLTIREYQQSLIEPGEAIGVVTAQSVGEPGTQMTLRTFHFAGIRELNVTLGLPRLIEIVDARKVPSTPMMTIYLTDEYKTDKDKALDIARRIEYTRVENVVSSVSVDISNMSITLQFDQEMLKDKGVSIEEIKKIITKLKLGEIRIEDNDEYSFTIYFEKIDSIMALFKMREKILNTKIKGVKGIKRAIVQKKGDEYVIITDGSNLEGIMNVTGVDINKIQTNNIHEVEEVLGIEAARELISREIKKVLEEQGLDVDMRHIVLVSDIMTRTGDIRQIGRHGVTGEKSSVLARAAFEVTVKHLLDAAARGEREEFKGVIENIIIGQPIRLGTGIVELTMKPNMR.

The protein belongs to the RNA polymerase beta' chain family. In terms of assembly, part of the 13-subunit RNA polymerase complex. Interacts with TFS4.

Its subcellular location is the cytoplasm. The catalysed reaction is RNA(n) + a ribonucleoside 5'-triphosphate = RNA(n+1) + diphosphate. DNA-dependent RNA polymerase (RNAP) catalyzes the transcription of DNA into RNA using the four ribonucleoside triphosphates as substrates. Forms part of the jaw domain. Functionally, reconstitution experiments show this subunit is required for basic activity. This is DNA-directed RNA polymerase subunit Rpo1C from Sulfolobus acidocaldarius (strain ATCC 33909 / DSM 639 / JCM 8929 / NBRC 15157 / NCIMB 11770).